We begin with the raw amino-acid sequence, 274 residues long: Large ribosomal subunit protein uL2 (274 aa).

The interval 195 to 274 (VGNSDHGLER…SKYIIERRKK (80 aa)) is disordered. Composition is skewed to basic residues over residues 207–220 (KAGR…RPRN) and 244–264 (PRSR…KKQS).

This sequence belongs to the universal ribosomal protein uL2 family. In terms of assembly, part of the 50S ribosomal subunit. Forms a bridge to the 30S subunit in the 70S ribosome.

Functionally, one of the primary rRNA binding proteins. Required for association of the 30S and 50S subunits to form the 70S ribosome, for tRNA binding and peptide bond formation. It has been suggested to have peptidyltransferase activity; this is somewhat controversial. Makes several contacts with the 16S rRNA in the 70S ribosome. In Bacteroides thetaiotaomicron (strain ATCC 29148 / DSM 2079 / JCM 5827 / CCUG 10774 / NCTC 10582 / VPI-5482 / E50), this protein is Large ribosomal subunit protein uL2.